The sequence spans 405 residues: Tryptophan synthase beta chain (405 aa).

The residue at position 95 (Lys-95) is an N6-(pyridoxal phosphate)lysine.

This sequence belongs to the TrpB family. In terms of assembly, tetramer of two alpha and two beta chains. Pyridoxal 5'-phosphate serves as cofactor.

It carries out the reaction (1S,2R)-1-C-(indol-3-yl)glycerol 3-phosphate + L-serine = D-glyceraldehyde 3-phosphate + L-tryptophan + H2O. The protein operates within amino-acid biosynthesis; L-tryptophan biosynthesis; L-tryptophan from chorismate: step 5/5. The beta subunit is responsible for the synthesis of L-tryptophan from indole and L-serine. The sequence is that of Tryptophan synthase beta chain from Pseudomonas entomophila (strain L48).